Consider the following 534-residue polypeptide: MEDNCTDMFNGCSKFDISIQTQVALLALIDNTGYTMVQVNGQRKFGGPPPGWEGPPPPRGCEVFVGKIPRDMYEDKLVPLFARAGKIYEFRLMMEFSGENRGYAFVMYTNKEEALLAIRMLNNYEICQGKFIGVCVSLDNCRLFIGSIPQEKRKEEILEEMKKVTEGVMDVIVYPSATDKTKNRGFAFVMYESHRAAAMARRKLIPGPFQLWGHTIKVAWASPEKEVDEETMQKVKVLYVRNLMMSTTEETIKAEFNRYKPGVVERVKKIRDYAFVHFFRRDYAIAAMSVMNGRLIDGARIEVTLAKPVNKEAAWRQNGNGHMNANSECLLNFANKEGSQKALDMCSNVPAYLNNPNSPTFLEPETCTYPCIPGTKLTPINLYSLKIHHFHSAVMHLEYFCYKNNWSFPEYYLYSTTGQDGKMLLAYKVILPAITGNTNSYFMPDKLCSFVEDAKELAAQFTLMHLDYSYHPTSGKNISLPSTAATSGTSGVLPYTPKPYSYSSYPSSPNVSLTNGGSVGKQLYVSNQASYFSG.

3 consecutive RRM domains span residues 61–139 (CEVF…VSLD), 141–223 (CRLF…WASP), and 236–308 (KVLY…LAKP).

Its subcellular location is the cytoplasm. Its function is as follows. Essential for male and female fertility, playing a crucial role in regulating germ cell development by ensuring the proper progression of meiosis prophase I. This is Probable RNA-binding protein 46 (rbm46) from Xenopus tropicalis (Western clawed frog).